Consider the following 351-residue polypeptide: Protein Wnt-2b-A (351 aa).

Positions 1–16 (MHFAYILILLILTPRV) are cleaved as a signal peptide. 11 cysteine pairs are disulfide-bonded: cysteine 67–cysteine 78, cysteine 118–cysteine 126, cysteine 128–cysteine 148, cysteine 197–cysteine 211, cysteine 199–cysteine 206, cysteine 269–cysteine 300, cysteine 285–cysteine 295, cysteine 299–cysteine 339, cysteine 315–cysteine 330, cysteine 317–cysteine 327, and cysteine 322–cysteine 323. N-linked (GlcNAc...) asparagine glycosylation occurs at asparagine 77. Serine 203 carries the O-palmitoleoyl serine; by PORCN lipid modification.

Belongs to the Wnt family. Post-translationally, palmitoleoylation is required for efficient binding to frizzled receptors. Depalmitoleoylation leads to Wnt signaling pathway inhibition. As to expression, expressed maternally in both vegetal and animal blastomeres with enrichment in the animal hemisphere. Expressed zygotically near the prosencephalic-mesencephalic boundary of the developing brain in neurula and tailbud stages, and also in non-brain areas at tadpole stages.

It localises to the secreted. Its subcellular location is the extracellular space. The protein localises to the extracellular matrix. Functionally, ligand for members of the frizzled family of seven transmembrane receptors. Functions in the canonical Wnt/beta-catenin signaling pathway. This is Protein Wnt-2b-A (wnt2b-a) from Xenopus laevis (African clawed frog).